A 142-amino-acid polypeptide reads, in one-letter code: Large ribosomal subunit protein uL13 (142 aa).

Belongs to the universal ribosomal protein uL13 family. As to quaternary structure, part of the 50S ribosomal subunit.

In terms of biological role, this protein is one of the early assembly proteins of the 50S ribosomal subunit, although it is not seen to bind rRNA by itself. It is important during the early stages of 50S assembly. The sequence is that of Large ribosomal subunit protein uL13 from Thermococcus kodakarensis (strain ATCC BAA-918 / JCM 12380 / KOD1) (Pyrococcus kodakaraensis (strain KOD1)).